A 105-amino-acid chain; its full sequence is UPF0060 membrane protein Rmet_4032 (105 aa).

The next 4 membrane-spanning stretches (helical) occupy residues Val4–Trp24, Gly28–Leu48, Ala60–Val80, and Pro82–Phe102.

The protein belongs to the UPF0060 family.

It is found in the cell inner membrane. This Cupriavidus metallidurans (strain ATCC 43123 / DSM 2839 / NBRC 102507 / CH34) (Ralstonia metallidurans) protein is UPF0060 membrane protein Rmet_4032.